Consider the following 877-residue polypeptide: Phosphoenolpyruvate carboxylase (877 aa).

Residues His138 and Lys544 contribute to the active site.

Belongs to the PEPCase type 1 family. Mg(2+) is required as a cofactor.

The enzyme catalyses oxaloacetate + phosphate = phosphoenolpyruvate + hydrogencarbonate. In terms of biological role, forms oxaloacetate, a four-carbon dicarboxylic acid source for the tricarboxylic acid cycle. This Vibrio vulnificus (strain CMCP6) protein is Phosphoenolpyruvate carboxylase.